Consider the following 354-residue polypeptide: Ion-translocating oxidoreductase complex subunit D (354 aa).

A run of 4 helical transmembrane segments spans residues 19 to 39, 40 to 60, 77 to 99, and 119 to 139; these read IMLL…YYFG, FGVL…EFLV, AAVT…LSFF, and IFNP…ILMT. T187 bears the FMN phosphoryl threonine mark. The next 5 helical transmembrane spans lie at 221–241, 245–265, 268–288, 295–315, and 319–339; these read WISI…FNVI, IPVS…YFFK, MYYP…FFIA, SITK…IWLI, and GNYP…VPLI.

It belongs to the NqrB/RnfD family. As to quaternary structure, the complex is composed of six subunits: RnfA, RnfB, RnfC, RnfD, RnfE and RnfG. FMN is required as a cofactor.

It localises to the cell inner membrane. Its function is as follows. Part of a membrane-bound complex that couples electron transfer with translocation of ions across the membrane. This is Ion-translocating oxidoreductase complex subunit D from Buchnera aphidicola subsp. Baizongia pistaciae (strain Bp).